The following is a 384-amino-acid chain: Substance-K receptor (384 aa).

Topologically, residues 1–32 (MGAHASVTDTNILSGLESNATGVTAFSMPGWQ) are extracellular. The N-linked (GlcNAc...) asparagine glycan is linked to Asn19. A helical membrane pass occupies residues 33-56 (LALWATAYLALVLVAVTGNATVIW). Over 57–69 (IILAHERMRTVTN) the chain is Cytoplasmic. The helical transmembrane segment at 70–90 (YFIINLALADLCMAAFNATFN) threads the bilayer. Topologically, residues 91 to 107 (FIYASHNIWYFGSTFCY) are extracellular. A disulfide bond links Cys106 and Cys181. Residues 108–129 (FQNLFPVTAMFVSIYSMTAIAA) form a helical membrane-spanning segment. Residues 130–149 (DRYMAIVHPFQPRLSAPSTK) are Cytoplasmic-facing. A helical membrane pass occupies residues 150–170 (AVIAVIWLVALALASPQCFYS). Over 171 to 196 (TITVDQGATKCVVAWPNDNGGKMLLL) the chain is Extracellular. The helical transmembrane segment at 197–218 (YHLVVFVLIYFLPLVVMFAAYS) threads the bilayer. Residues 219–251 (VIGLTLWKRAVPRHQAHGANLRHLQAKKKFVKA) lie on the Cytoplasmic side of the membrane. Residues 252 to 272 (MVLVVVTFAICWLPYHLYFIL) traverse the membrane as a helical segment. Over 273-290 (GTFQEDIYYRKFIQQVYL) the chain is Extracellular. A helical transmembrane segment spans residues 291–310 (ALFWLAMSSTMYNPIIYCCL). Topologically, residues 311 to 384 (NHRFRSGFRL…GPQDGEPAGP (74 aa)) are cytoplasmic. The S-palmitoyl cysteine moiety is linked to residue Cys324. The tract at residues 365 to 384 (HSEATNGQVGGPQDGEPAGP) is disordered.

This sequence belongs to the G-protein coupled receptor 1 family.

It is found in the cell membrane. This is a receptor for the tachykinin neuropeptide substance K (neurokinin A). It is associated with G proteins that activate a phosphatidylinositol-calcium second messenger system. The rank order of affinity of this receptor to tachykinins is: substance K &gt; neuromedin-K &gt; substance P. The chain is Substance-K receptor (Tacr2) from Mus musculus (Mouse).